The chain runs to 32 residues: Natriuretic peptide Coa_NP1 (32 aa).

Cys8 and Cys24 are disulfide-bonded.

It belongs to the natriuretic peptide family. Snake NP subfamily. In terms of tissue distribution, expressed by the venom gland.

It localises to the secreted. Functionally, snake venom natriuretic peptide that exhibits hypotensive and vasodepressor activity in rats. This is Natriuretic peptide Coa_NP1 from Crotalus lutosus abyssus (Grand Canyon rattlesnake).